Here is a 222-residue protein sequence, read N- to C-terminus: Embryonic stem cell-related gene protein (222 aa).

Expressed only in fetal ovary and in undifferentiated ES cells.

It is found in the nucleus. The protein is Embryonic stem cell-related gene protein (ESRG) of Homo sapiens (Human).